We begin with the raw amino-acid sequence, 123 residues long: Small ribosomal subunit protein uS12 (123 aa).

Residues 1–30 are disordered; it reads MPTIQQLIRKPRQPKIKRSKSQHMEGCPQK. Residues 9 to 21 show a composition bias toward basic residues; sequence RKPRQPKIKRSKS. At Asp89 the chain carries 3-methylthioaspartic acid. Residues 104–123 are disordered; sequence TQGVKDRRQRRSKYGAKRPK. Residues 110-123 are compositionally biased toward basic residues; it reads RRQRRSKYGAKRPK.

Belongs to the universal ribosomal protein uS12 family. In terms of assembly, part of the 30S ribosomal subunit. Contacts proteins S8 and S17. May interact with IF1 in the 30S initiation complex.

In terms of biological role, with S4 and S5 plays an important role in translational accuracy. Interacts with and stabilizes bases of the 16S rRNA that are involved in tRNA selection in the A site and with the mRNA backbone. Located at the interface of the 30S and 50S subunits, it traverses the body of the 30S subunit contacting proteins on the other side and probably holding the rRNA structure together. The combined cluster of proteins S8, S12 and S17 appears to hold together the shoulder and platform of the 30S subunit. The chain is Small ribosomal subunit protein uS12 from Jannaschia sp. (strain CCS1).